The chain runs to 535 residues: 2-(3-amino-3-carboxypropyl)histidine synthase subunit 2 (535 aa).

Residues Cys-107, Cys-128, and Cys-342 each contribute to the [4Fe-4S] cluster site. The span at 390–401 shows a compositional bias: basic and acidic residues; that stretch reads NDKPEDASKESE. Disordered stretches follow at residues 390–471 and 512–535; these read NDKP…QQND and ASTL…SGRH. Over residues 404–424 the composition is skewed to acidic residues; sequence VAEEEVEFEDVAGGVEGEESA. Positions 449-471 are enriched in polar residues; that stretch reads NPSTTAETEANSDGQPTSTQQND.

It belongs to the DPH1/DPH2 family. DPH2 subfamily. As to quaternary structure, component of the 2-(3-amino-3-carboxypropyl)histidine synthase complex composed of DPH1, DPH2, DPH3 and a NADH-dependent reductase, predominantly CBR1. [4Fe-4S] cluster is required as a cofactor.

It localises to the cytoplasm. It functions in the pathway protein modification; peptidyl-diphthamide biosynthesis. Required for the first step of diphthamide biosynthesis, a post-translational modification of histidine which occurs in elongation factor 2. DPH1 and DPH2 transfer a 3-amino-3-carboxypropyl (ACP) group from S-adenosyl-L-methionine (SAM) to a histidine residue, the reaction is assisted by a reduction system comprising DPH3 and a NADH-dependent reductase, predominantly CBR1. Facilitates the reduction of the catalytic iron-sulfur cluster found in the DPH1 subunit. This Gibberella zeae (strain ATCC MYA-4620 / CBS 123657 / FGSC 9075 / NRRL 31084 / PH-1) (Wheat head blight fungus) protein is 2-(3-amino-3-carboxypropyl)histidine synthase subunit 2 (DPH2).